We begin with the raw amino-acid sequence, 153 residues long: Late embryogenesis abundant protein B19.4 (153 aa).

The tract at residues 1–153 (MASGQQERSE…IDESKFKTKS (153 aa)) is disordered. Basic and acidic residues-rich tracts occupy residues 7–19 (ERSE…REGE), 32–122 (EAQE…EMGR), and 133–153 (GGER…KTKS). 4 tandem repeats follow at residues 43 to 62 (RGGQ…EMGH), 63 to 82 (KGGE…EMGH), 83 to 102 (KGGE…EMGH), and 103 to 122 (KGGE…EMGR). Residues 43-122 (RGGQTRKEQL…GEEGYREMGR (80 aa)) are 4 X 20 AA tandem repeats.

This sequence belongs to the small hydrophilic plant seed protein family.

Functionally, lea proteins are late embryonic proteins abundant in higher plant seed embryos. This is Late embryogenesis abundant protein B19.4 (B19.4) from Hordeum vulgare (Barley).